Consider the following 269-residue polypeptide: Triosephosphate isomerase (269 aa).

8–10 (NWK) is a substrate binding site. The active-site Electrophile is the H105. E183 acts as the Proton acceptor in catalysis. Substrate is bound by residues G189, S227, and 248 to 249 (GG).

The protein belongs to the triosephosphate isomerase family. Homodimer.

It is found in the cytoplasm. The catalysed reaction is D-glyceraldehyde 3-phosphate = dihydroxyacetone phosphate. It participates in carbohydrate biosynthesis; gluconeogenesis. It functions in the pathway carbohydrate degradation; glycolysis; D-glyceraldehyde 3-phosphate from glycerone phosphate: step 1/1. Involved in the gluconeogenesis. Catalyzes stereospecifically the conversion of dihydroxyacetone phosphate (DHAP) to D-glyceraldehyde-3-phosphate (G3P). This Psychrobacter cryohalolentis (strain ATCC BAA-1226 / DSM 17306 / VKM B-2378 / K5) protein is Triosephosphate isomerase.